Reading from the N-terminus, the 277-residue chain is S-formylglutathione hydrolase FrmB (277 aa).

Catalysis depends on charge relay system residues Ser-145, Asp-221, and His-254.

Belongs to the esterase D family.

The enzyme catalyses S-formylglutathione + H2O = formate + glutathione + H(+). Serine hydrolase involved in the detoxification of formaldehyde. Hydrolyzes S-formylglutathione to glutathione and formate. This Escherichia coli (strain SMS-3-5 / SECEC) protein is S-formylglutathione hydrolase FrmB (frmB).